The following is a 663-amino-acid chain: Probable serine/threonine-protein kinase DDB_G0283301 (663 aa).

The Protein kinase domain occupies 312–586; that stretch reads IERRNELGRG…EECVERLITL (275 aa). ATP-binding positions include 318 to 326 and lysine 348; that span reads LGRGGNGTV. Aspartate 440 serves as the catalytic Proton acceptor.

This sequence belongs to the protein kinase superfamily. Ser/Thr protein kinase family.

The enzyme catalyses L-seryl-[protein] + ATP = O-phospho-L-seryl-[protein] + ADP + H(+). It catalyses the reaction L-threonyl-[protein] + ATP = O-phospho-L-threonyl-[protein] + ADP + H(+). This chain is Probable serine/threonine-protein kinase DDB_G0283301, found in Dictyostelium discoideum (Social amoeba).